The sequence spans 682 residues: Nisin leader peptide-processing serine protease NisP (682 aa).

Positions 1-22 (MKKILGFLFIVCSLGLSATVHG) are cleaved as a signal peptide. A propeptide spanning residues 23–195 (ETTNSQQLLS…RKAKEVVSLR (173 aa)) is cleaved from the precursor. In terms of domain architecture, Peptidase S8 spans 231–566 (QWDMKYVTNN…VDLLNGKNKA (336 aa)). Residues aspartate 259, histidine 306, and serine 512 each act as charge relay system in the active site. Residues 652-656 (LPVTG) carry the LPXTG sorting signal motif. Threonine 655 carries the pentaglycyl murein peptidoglycan amidated threonine modification. Positions 656-682 (GDGEDFLPALGIVCISILGILKRKTKN) are cleaved as a propeptide — removed by sortase.

This sequence belongs to the peptidase S8 family.

It localises to the secreted. The protein localises to the cell wall. It participates in antibiotic biosynthesis; nisin biosynthesis. Functionally, cleaves the lantibiotic nisin precursor peptide. In Lactococcus lactis subsp. lactis (Streptococcus lactis), this protein is Nisin leader peptide-processing serine protease NisP (nisP).